A 769-amino-acid chain; its full sequence is Serine protease HtrA-like (769 aa).

The segment covering 1–20 (MDIGKKHVIPKSQYRRKRRE) has biased composition (basic residues). The interval 1–388 (MDIGKKHVIP…KKATSKLNKG (388 aa)) is disordered. Composition is skewed to basic and acidic residues over residues 21–64 (FFHN…ERFK), 71–87 (LEQR…EESK), and 96–108 (YNKD…DVSK). Residues 126–139 (YEQNTEATLSTNST) show a composition bias toward polar residues. A compositionally biased stretch (basic and acidic residues) spans 140-186 (DKVESTDMRKLSSDKNKVGHEEQHVLSKPSEHDKETRIDFESSRTDS). Positions 247 to 262 (QQSQNEQTKTYTYGDS) are enriched in polar residues. Composition is skewed to basic and acidic residues over residues 264 to 296 (QNDK…HIVD) and 310 to 330 (KIDD…HKQN). Residues 331 to 347 (ADSSETVGYQSQSSASH) show a composition bias toward polar residues. Residues 348-364 (RSTEKRNMAINDHDKLN) are compositionally biased toward basic and acidic residues. Residues 366 to 388 (QKPNTKTSANNNQKKATSKLNKG) are compositionally biased toward polar residues. The chain crosses the membrane as a helical span at residues 410–430 (LVILMGIIILIVILNAIFNNV). Residues His-504, Asp-534, and Ser-619 each act as charge relay system in the active site. In terms of domain architecture, PDZ spans 680–733 (IASLNSFERQAVKLLGKVKNGVVVDQVDNNGLADQSGLKKGDVITELDGKLLED).

The protein belongs to the peptidase S1C family.

It is found in the cell membrane. In Staphylococcus aureus (strain MRSA252), this protein is Serine protease HtrA-like.